The sequence spans 366 residues: MWPPSHRQLCRAFLLVCVFSVISFFLHIHQDSFPHGLGLSILCPDRRLVTPPVAIFCLPGTAMGPNASSSCPQHPASLSGTWTVYPNGRFGNQMGQYATLLALAQLNGRRAFILPAMHAALAPVFRITLPVLAPEVDSRTPWRELQLHDWMSEEYADLGDPFLKLSGFPCSWTFFHHLREQIRREFTLHDHLREEAQSVLGQLRLGRTGDRPRTFVGVHVRRGDYLQVMPQRWKGVVGDSAYLRQAMDWFRARHEAPVFVVTSNGMEWCKENIDTSQGDVTFAGDGQEATPWKDFALLTQCNHTIMTIGTFGFWAAYLAGGDTVYLANFTLPDSEFLKIFKPEAAFLPEWVGINADLSPLWTLAKP.

At 1–8 (MWPPSHRQ) the chain is on the cytoplasmic side. Residues 9–25 (LCRAFLLVCVFSVISFF) form a helical; Signal-anchor for type II membrane protein membrane-spanning segment. Topologically, residues 26 to 366 (LHIHQDSFPH…LSPLWTLAKP (341 aa)) are lumenal. N-linked (GlcNAc...) asparagine glycans are attached at residues N66, N302, and N328.

Belongs to the glycosyltransferase 11 family.

It is found in the golgi apparatus. The protein localises to the golgi stack membrane. The enzyme catalyses a beta-D-galactosyl-(1-&gt;4)-N-acetyl-beta-D-glucosaminyl derivative + GDP-beta-L-fucose = an alpha-L-Fuc-(1-&gt;2)-beta-D-Gal-(1-&gt;4)-beta-D-GlcNAc derivative + GDP + H(+). It carries out the reaction a ganglioside GA1 + GDP-beta-L-fucose = a ganglioside Fuc-GA1 + GDP + H(+). It catalyses the reaction a beta-D-Gal-(1-&gt;3)-beta-D-GlcNAc-(1-&gt;3)-beta-D-Gal-(1-&gt;4)-beta-D-Glc-(1&lt;-&gt;1')-Cer(d18:1(4E)) + GDP-beta-L-fucose = alpha-L-fucosyl-(1-&gt;2)- beta-D-galactosyl-(1-&gt;3)-N-acetyl-beta-D-glucosaminyl-(1-&gt;3)-beta-D-galactosyl-(1-&gt;4)-beta-D-glucosyl-(1&lt;-&gt;1')-N-acylsphing-4-enine + GDP + H(+). The catalysed reaction is a neolactoside nLc4Cer(d18:1(4E)) + GDP-beta-L-fucose = a neolactoside IV(2)-alpha-Fuc-nLc4Cer(d18:1(4E)) + GDP + H(+). The enzyme catalyses a ganglioside GM1 + GDP-beta-L-fucose = a ganglioside Fuc-GM1 + GDP + H(+). It carries out the reaction beta-D-galactosyl-(1-&gt;3)-N-acetyl-D-galactosamine + GDP-beta-L-fucose = alpha-L-fucosyl-(1-&gt;2)-beta-D-galactosyl-(1-&gt;3)-N-acetyl-D-galactosamine + GDP + H(+). It functions in the pathway protein modification; protein glycosylation. Catalyzes the transfer of L-fucose, from a guanosine diphosphate-beta-L-fucose, to the terminal galactose residue of glycoconjugates through an alpha(1,2) linkage leading to H antigen synthesis that is an intermediate substrate in the synthesis of ABO blood group antigens. H antigen is essential for maturation of the glomerular layer of the main olfactory bulb, in cell migration and early cell-cell contacts during tumor associated angiogenesis. Preferentially fucosylates soluble lactose and to a lesser extent fucosylates glycolipids gangliosides GA1 and GM1a. In Gorilla gorilla gorilla (Western lowland gorilla), this protein is Galactoside alpha-(1,2)-fucosyltransferase 1.